The chain runs to 629 residues: Phosphoglucomutase, chloroplastic (629 aa).

A chloroplast-targeting transit peptide spans 1 to 69 (MSSTYARFDT…SSSSGPIIAG (69 aa)). Alpha-D-glucose 1,6-bisphosphate contacts are provided by Arg94 and Ser187. The Phosphoserine intermediate role is filled by Ser187. Residues Ser187, Asp352, Asp354, and Asp356 each coordinate Mg(2+). Phosphoserine is present on Ser187. Residues Asp356, Arg357, Thr420, Glu439, Ser441, and Lys452 each contribute to the alpha-D-glucose 1,6-bisphosphate site.

The protein belongs to the phosphohexose mutase family. Monomer. It depends on Mg(2+) as a cofactor.

The protein resides in the plastid. The protein localises to the chloroplast. It carries out the reaction alpha-D-glucose 1-phosphate = alpha-D-glucose 6-phosphate. The catalysed reaction is O-phospho-L-seryl-[protein] + alpha-D-glucose 1-phosphate = alpha-D-glucose 1,6-bisphosphate + L-seryl-[protein]. The enzyme catalyses alpha-D-glucose 1,6-bisphosphate + L-seryl-[protein] = O-phospho-L-seryl-[protein] + alpha-D-glucose 6-phosphate. With respect to regulation, inhibited by the Calvin cycle intermediates fructose-1,6-bisphosphate and ribulose-1,5-bisphosphate. In terms of biological role, catalyzes the reversible isomerization of alpha-D-glucose 1-phosphate to alpha-D-glucose 6-phosphate. The mechanism proceeds via the intermediate compound alpha-D-glucose 1,6-bisphosphate. This enzyme participates in both the breakdown and synthesis of glucose. This chain is Phosphoglucomutase, chloroplastic (PGMP), found in Brassica napus (Rape).